A 598-amino-acid chain; its full sequence is Elongation factor 4 (598 aa).

Residues 2–184 (NRIRNFSIIA…TIVAKLPPPK (183 aa)) form the tr-type G domain. GTP is bound by residues 14-19 (DHGKST) and 131-134 (NKID).

The protein belongs to the TRAFAC class translation factor GTPase superfamily. Classic translation factor GTPase family. LepA subfamily.

It localises to the cell inner membrane. The catalysed reaction is GTP + H2O = GDP + phosphate + H(+). Its function is as follows. Required for accurate and efficient protein synthesis under certain stress conditions. May act as a fidelity factor of the translation reaction, by catalyzing a one-codon backward translocation of tRNAs on improperly translocated ribosomes. Back-translocation proceeds from a post-translocation (POST) complex to a pre-translocation (PRE) complex, thus giving elongation factor G a second chance to translocate the tRNAs correctly. Binds to ribosomes in a GTP-dependent manner. This is Elongation factor 4 from Desulfosudis oleivorans (strain DSM 6200 / JCM 39069 / Hxd3) (Desulfococcus oleovorans).